The following is a 426-amino-acid chain: UDP-N-acetylglucosamine 1-carboxyvinyltransferase (426 aa).

Residue 24 to 25 (KN) coordinates phosphoenolpyruvate. Residue arginine 95 participates in UDP-N-acetyl-alpha-D-glucosamine binding. The active-site Proton donor is the cysteine 119. Position 119 is a 2-(S-cysteinyl)pyruvic acid O-phosphothioketal (cysteine 119). UDP-N-acetyl-alpha-D-glucosamine-binding positions include 124–128 (RPVDQ), aspartate 308, and valine 330.

This sequence belongs to the EPSP synthase family. MurA subfamily.

The protein resides in the cytoplasm. It catalyses the reaction phosphoenolpyruvate + UDP-N-acetyl-alpha-D-glucosamine = UDP-N-acetyl-3-O-(1-carboxyvinyl)-alpha-D-glucosamine + phosphate. Its pathway is cell wall biogenesis; peptidoglycan biosynthesis. In terms of biological role, cell wall formation. Adds enolpyruvyl to UDP-N-acetylglucosamine. The polypeptide is UDP-N-acetylglucosamine 1-carboxyvinyltransferase (Deinococcus radiodurans (strain ATCC 13939 / DSM 20539 / JCM 16871 / CCUG 27074 / LMG 4051 / NBRC 15346 / NCIMB 9279 / VKM B-1422 / R1)).